We begin with the raw amino-acid sequence, 583 residues long: CTP synthase (583 aa).

An amidoligase domain region spans residues 1 to 278 (MRKHPQTATK…DAYVVRRLNL (278 aa)). Residue serine 20 participates in CTP binding. Serine 20 serves as a coordination point for UTP. ATP contacts are provided by residues 21 to 26 (SLGKGL) and aspartate 78. Residues aspartate 78 and glutamate 152 each coordinate Mg(2+). CTP-binding positions include 159 to 161 (DIE), 199 to 204 (KTKPTQ), and lysine 235. Residues 199 to 204 (KTKPTQ) and lysine 235 each bind UTP. Positions 303–551 (RIALVGKYVE…VGAAMDYKAG (249 aa)) constitute a Glutamine amidotransferase type-1 domain. Glycine 366 provides a ligand contact to L-glutamine. Cysteine 393 functions as the Nucleophile; for glutamine hydrolysis in the catalytic mechanism. L-glutamine contacts are provided by residues 394–397 (LGLQ), glutamate 416, and arginine 477. Active-site residues include histidine 524 and glutamate 526. Positions 560 to 583 (EQSSNGIQHRDSAARPIPEPAARG) are disordered.

This sequence belongs to the CTP synthase family. As to quaternary structure, homotetramer.

The catalysed reaction is UTP + L-glutamine + ATP + H2O = CTP + L-glutamate + ADP + phosphate + 2 H(+). The enzyme catalyses L-glutamine + H2O = L-glutamate + NH4(+). It catalyses the reaction UTP + NH4(+) + ATP = CTP + ADP + phosphate + 2 H(+). The protein operates within pyrimidine metabolism; CTP biosynthesis via de novo pathway; CTP from UDP: step 2/2. Its activity is regulated as follows. Allosterically activated by GTP, when glutamine is the substrate; GTP has no effect on the reaction when ammonia is the substrate. The allosteric effector GTP functions by stabilizing the protein conformation that binds the tetrahedral intermediate(s) formed during glutamine hydrolysis. Inhibited by the product CTP, via allosteric rather than competitive inhibition. Functionally, catalyzes the ATP-dependent amination of UTP to CTP with either L-glutamine or ammonia as the source of nitrogen. Regulates intracellular CTP levels through interactions with the four ribonucleotide triphosphates. This is CTP synthase from Mycolicibacterium paratuberculosis (strain ATCC BAA-968 / K-10) (Mycobacterium paratuberculosis).